The chain runs to 140 residues: Large ribosomal subunit protein uL3 (140 aa).

This sequence belongs to the universal ribosomal protein uL3 family. In terms of assembly, part of the 50S ribosomal subunit. Forms a cluster with proteins L14 and L19.

Its function is as follows. One of the primary rRNA binding proteins, it binds directly near the 3'-end of the 23S rRNA, where it nucleates assembly of the 50S subunit. The sequence is that of Large ribosomal subunit protein uL3 (rplC) from Planobispora rosea.